The sequence spans 464 residues: UDP-N-acetylmuramate--L-alanine ligase (464 aa).

115–121 contacts ATP; it reads GSHGKTT.

The protein belongs to the MurCDEF family.

It is found in the cytoplasm. The enzyme catalyses UDP-N-acetyl-alpha-D-muramate + L-alanine + ATP = UDP-N-acetyl-alpha-D-muramoyl-L-alanine + ADP + phosphate + H(+). It functions in the pathway cell wall biogenesis; peptidoglycan biosynthesis. Cell wall formation. The sequence is that of UDP-N-acetylmuramate--L-alanine ligase from Pelagibacter ubique (strain HTCC1062).